The primary structure comprises 333 residues: 4-hydroxythreonine-4-phosphate dehydrogenase (333 aa).

Substrate contacts are provided by H133 and T134. A divalent metal cation is bound by residues H169, H214, and H269. The substrate site is built by K277, N286, and R295.

The protein belongs to the PdxA family. Homodimer. Requires Zn(2+) as cofactor. The cofactor is Mg(2+). Co(2+) serves as cofactor.

The protein resides in the cytoplasm. It carries out the reaction 4-(phosphooxy)-L-threonine + NAD(+) = 3-amino-2-oxopropyl phosphate + CO2 + NADH. The protein operates within cofactor biosynthesis; pyridoxine 5'-phosphate biosynthesis; pyridoxine 5'-phosphate from D-erythrose 4-phosphate: step 4/5. Functionally, catalyzes the NAD(P)-dependent oxidation of 4-(phosphooxy)-L-threonine (HTP) into 2-amino-3-oxo-4-(phosphooxy)butyric acid which spontaneously decarboxylates to form 3-amino-2-oxopropyl phosphate (AHAP). This chain is 4-hydroxythreonine-4-phosphate dehydrogenase, found in Caulobacter vibrioides (strain ATCC 19089 / CIP 103742 / CB 15) (Caulobacter crescentus).